A 141-amino-acid polypeptide reads, in one-letter code: Galactose-6-phosphate isomerase subunit LacA (141 aa).

The protein belongs to the LacAB/RpiB family. Heteromultimeric protein consisting of LacA and LacB.

It catalyses the reaction aldehydo-D-galactose 6-phosphate = keto-D-tagatose 6-phosphate. It participates in carbohydrate metabolism; D-galactose 6-phosphate degradation; D-tagatose 6-phosphate from D-galactose 6-phosphate: step 1/1. This chain is Galactose-6-phosphate isomerase subunit LacA, found in Streptococcus pneumoniae serotype 2 (strain D39 / NCTC 7466).